The primary structure comprises 2193 residues: Non-reducing polyketide synthase esdpA (2193 aa).

One can recognise a Starter acyltransferase (SAT) domain in the interval 90–252 (NVLLAPLTVL…AKVQVNGRYH (163 aa)). A Ketosynthase family 3 (KS3) domain is found at 381–797 (DECVAIVGAA…GNNTVIIVCE (417 aa)). Catalysis depends on for beta-ketoacyl synthase activity residues Cys-546, His-682, and His-720. One can recognise a Malonyl-CoA:ACP transacylase (MAT) domain in the interval 906–1158 (VFSGQSGMTV…YFVDAVRRIK (253 aa)). The active-site For acyl/malonyl transferase activity is Ser-992. An N-terminal hotdog fold region spans residues 1265-1392 (PPMLSLENFS…GRVVLEDRRR (128 aa)). Residues 1265–1569 (PPMLSLENFS…FVKISSHILQ (305 aa)) form the PKS/mFAS DH domain. The tract at residues 1419–1569 (VFSASGSIAY…FVKISSHILQ (151 aa)) is C-terminal hotdog fold. Asp-1479 serves as the catalytic Proton donor; for dehydratase activity. The 77-residue stretch at 1723 to 1799 (RILSDSMIKL…ELHDLMQSHP (77 aa)) folds into the Carrier domain. Residue Ser-1759 is modified to O-(pantetheine 4'-phosphoryl)serine. Residues 1944-2177 (YHGSEHKLLR…GFTHVDWSND (234 aa)) are methyltransferase (CMeT) domain.

The cofactor is pantetheine 4'-phosphate.

Its pathway is secondary metabolite biosynthesis; terpenoid biosynthesis. Non-reducing polyketide synthase; part of the cluster that mediates the biosynthesis of shearones, diterpenoid pyrones (DPs) which are structurally diverse meroterpenoids consisting of a diterpene linked by a pyrone, and which may exhibit a range of bioactivities. Whitin the pathway, esdpA takes part to the biosynthesis of the molecular scaffold via the production of the alpha-pyrone from one molecule of acetyl-CoA, two molecules of malonyl-CoA and one molecule of S-adenosyl-L-methionine (SAM). The molecular scaffold is commonly biosynthesized by a series of enzymes including the non-reducing polyketide synthase (NR-PKS) esdpA that generates an alpha-pyrone; the prenyltransferase esdpC that attaches a geranylgeranyl pyrophosphate (GGPP) produced by the GGPP synthase (GGPPS) esdpD onto the pyrone unit; the FAD-dependent monooxygenase esdpE that converts an olefin on the diterpene unit into an epoxide; and the terpene cyclase esdpB that catalyzes the cyclization reactions to give the molecular backbone shearone A. In the modification steps, esdpF oxidizes the hydroxy group to a ketone at C-3 and esdpG then attaches hydroxy groups at both C-11 and C-12. After that, esdpI hydroxylates at C-20 and esdpH hydroxylates at C-6'. The ether bridge is generated by nucleophilic attack of the hydroxy group at C-20 to the carbonyl carbon at C-3. EsdpH can also functions prior to esdpI. The different combinations of these modification enzymes lead to the production of diverse shearone derivatives, shearone I being the end product of the pathway. The alpha-ketoglutarate-dependent dioxygenase esdpJ seems not to be involved in this pathway. This is Non-reducing polyketide synthase esdpA from Penicillium shearii (Eupenicillium shearii).